We begin with the raw amino-acid sequence, 592 residues long: Methionine--tRNA ligase (592 aa).

A 'HIGH' region motif is present at residues 12-22; the sequence is PYANGPFHVGH. Cys-144, Cys-147, Cys-157, and Cys-160 together coordinate Zn(2+). The 'KMSKS' region signature appears at 342-346; that stretch reads KMSTS. Thr-345 contacts ATP.

Belongs to the class-I aminoacyl-tRNA synthetase family. MetG type 1 subfamily. Monomer. Requires Zn(2+) as cofactor.

Its subcellular location is the cytoplasm. The enzyme catalyses tRNA(Met) + L-methionine + ATP = L-methionyl-tRNA(Met) + AMP + diphosphate. In terms of biological role, is required not only for elongation of protein synthesis but also for the initiation of all mRNA translation through initiator tRNA(fMet) aminoacylation. The chain is Methionine--tRNA ligase from Roseiflexus sp. (strain RS-1).